Consider the following 387-residue polypeptide: Phosphoglycerate kinase (387 aa).

Substrate contacts are provided by residues 21–23, arginine 36, and 59–62; these read DLN and HLGR. Lysine 84 carries the N6-acetyllysine modification. Substrate contacts are provided by arginine 113 and arginine 146. ATP contacts are provided by residues lysine 197, glutamate 314, and 340–343; that span reads GGDT.

It belongs to the phosphoglycerate kinase family. In terms of assembly, monomer.

The protein resides in the cytoplasm. It catalyses the reaction (2R)-3-phosphoglycerate + ATP = (2R)-3-phospho-glyceroyl phosphate + ADP. The protein operates within carbohydrate degradation; glycolysis; pyruvate from D-glyceraldehyde 3-phosphate: step 2/5. This Escherichia coli O9:H4 (strain HS) protein is Phosphoglycerate kinase.